Reading from the N-terminus, the 255-residue chain is Altered inheritance of mitochondria protein 36, mitochondrial (255 aa).

Residues 1-40 (MLRPLRKSVLASCRHCFKVCGGLPQKQLPLFSPLLLRARY) constitute a mitochondrion transit peptide. A helical membrane pass occupies residues 64–82 (IFLVAIIGTVIFVKTVQSL).

This sequence belongs to the AIM36 family.

The protein resides in the mitochondrion membrane. The polypeptide is Altered inheritance of mitochondria protein 36, mitochondrial (AIM36) (Saccharomyces cerevisiae (strain RM11-1a) (Baker's yeast)).